Consider the following 157-residue polypeptide: Transcription elongation factor GreA (157 aa).

This sequence belongs to the GreA/GreB family.

Its function is as follows. Necessary for efficient RNA polymerase transcription elongation past template-encoded arresting sites. The arresting sites in DNA have the property of trapping a certain fraction of elongating RNA polymerases that pass through, resulting in locked ternary complexes. Cleavage of the nascent transcript by cleavage factors such as GreA or GreB allows the resumption of elongation from the new 3'terminus. GreA releases sequences of 2 to 3 nucleotides. The sequence is that of Transcription elongation factor GreA from Mesorhizobium japonicum (strain LMG 29417 / CECT 9101 / MAFF 303099) (Mesorhizobium loti (strain MAFF 303099)).